A 52-amino-acid chain; its full sequence is MGFWRIVITIILPPLGVLLGKGFGWAFIINILLTLLGYIPGLIHAFWVQTRD.

The next 2 helical transmembrane spans lie at 1–21 (MGFW…LLGK) and 23–43 (FGWA…PGLI).

Belongs to the UPF0057 (PMP3) family.

It is found in the cell membrane. The polypeptide is UPF0057 membrane protein YqaE (yqaE) (Escherichia coli O157:H7).